The following is a 254-amino-acid chain: Adenosylcobinamide-GDP ribazoletransferase (254 aa).

The next 7 membrane-spanning stretches (helical) occupy residues 27 to 47, 50 to 70, 104 to 124, 131 to 151, 170 to 190, 194 to 214, and 233 to 253; these read SSLY…VLLA, GMGV…GLIL, VGSF…ICLL, AYGM…LLAA, AGWP…FVLL, LAPS…VGWL, and LVEA…FWAI.

This sequence belongs to the CobS family. Mg(2+) serves as cofactor.

It is found in the cell inner membrane. It carries out the reaction alpha-ribazole + adenosylcob(III)inamide-GDP = adenosylcob(III)alamin + GMP + H(+). The catalysed reaction is alpha-ribazole 5'-phosphate + adenosylcob(III)inamide-GDP = adenosylcob(III)alamin 5'-phosphate + GMP + H(+). It participates in cofactor biosynthesis; adenosylcobalamin biosynthesis; adenosylcobalamin from cob(II)yrinate a,c-diamide: step 7/7. Joins adenosylcobinamide-GDP and alpha-ribazole to generate adenosylcobalamin (Ado-cobalamin). Also synthesizes adenosylcobalamin 5'-phosphate from adenosylcobinamide-GDP and alpha-ribazole 5'-phosphate. The chain is Adenosylcobinamide-GDP ribazoletransferase from Chlorobaculum tepidum (strain ATCC 49652 / DSM 12025 / NBRC 103806 / TLS) (Chlorobium tepidum).